Consider the following 600-residue polypeptide: ATP-dependent ubiquitin transferase-like protein Cap2 (600 aa).

An E2-like domain region spans residues 1–158; the sequence is MSTVVQQVPA…QEKLATTGDA (158 aa). Cysteine 109 serves as the catalytic For E2-like domain. The segment at 159–373 is linker domain; that stretch reads VELPAFPDQS…DQLRTRGEAA (215 aa). Residues 375 to 600 form an adenylation plus E1-like domain region; it reads DIRSKKVLII…GTVEKEPHEY (226 aa). The active-site For E1-like domain is the cysteine 548.

The protein in the C-terminal section; belongs to the HesA/MoeB/ThiF family. Crystallizes as a Cap2 homodimer bound on each side by a CdnD monomer.

Functionally, CD-NTase priming component of a CBASS antiviral system. CBASS (cyclic oligonucleotide-based antiphage signaling system) provides immunity against bacteriophages. The CD-NTase protein (CdnD) synthesizes cyclic nucleotides in response to infection; these serve as specific second messenger signals. The signals activate a diverse range of effectors, leading to bacterial cell death and thus abortive phage infection. A type II-C(AAG) CBASS system. Primes CdnD; acts as a protein transferase, conjugating CdnD, the CD-NTase, to unidentified target(s) in the cell via an E1-E2 ubiquitin transferase-like mechanism. Upon phage infection CdnD activates and makes cyclic nucleotides. During the conjugation reaction CdnD is transiently attached to AMP. Protein conjugation requires ATP. Its function is as follows. Protects E.coli against phage T2 infection. When the cdnD-cap2-cap3-cap4 operon is introduced in E.coli there is a more than 10(3) decrease in the efficiency of T2 plaque formation. The operon does not protect against phage T5 and only about 10-fold against T7. This Enterobacter hormaechei subsp. hoffmannii (strain UCI 50) protein is ATP-dependent ubiquitin transferase-like protein Cap2.